Here is a 167-residue protein sequence, read N- to C-terminus: Bacterial non-heme ferritin (167 aa).

One can recognise a Ferritin-like diiron domain in the interval 2–145 (LNKELLDALN…THIDYLNRIG (144 aa)). Positions 17, 50, 53, 94, and 127 each coordinate Fe cation.

It belongs to the ferritin family. Prokaryotic subfamily.

The protein localises to the cytoplasm. It carries out the reaction 4 Fe(2+) + O2 + 6 H2O = 4 iron(III) oxide-hydroxide + 12 H(+). Functionally, iron-storage protein. This is Bacterial non-heme ferritin (ftnA) from Staphylococcus saprophyticus subsp. saprophyticus (strain ATCC 15305 / DSM 20229 / NCIMB 8711 / NCTC 7292 / S-41).